The chain runs to 39 residues: Pro-opiomelanocortin (39 aa).

Ser-1 is subject to N-acetylserine. At Val-13 the chain carries Valine amide. Position 31 is a phosphoserine (Ser-31).

It belongs to the POMC family.

The protein resides in the secreted. Its function is as follows. Precursor protein for pituitary hormones that regulate stress and environmental adaptation. Functionally, stimulates the adrenal glands to release cortisol. In terms of biological role, anorexigenic peptide. Increases the pigmentation of skin by increasing melanin production in melanocytes. This chain is Pro-opiomelanocortin (POMC), found in Balaenoptera borealis (Sei whale).